We begin with the raw amino-acid sequence, 392 residues long: Sulfate adenylyltransferase (392 aa).

It belongs to the sulfate adenylyltransferase family.

It carries out the reaction sulfate + ATP + H(+) = adenosine 5'-phosphosulfate + diphosphate. It functions in the pathway sulfur metabolism; hydrogen sulfide biosynthesis; sulfite from sulfate: step 1/3. The chain is Sulfate adenylyltransferase from Nostoc punctiforme (strain ATCC 29133 / PCC 73102).